Here is a 211-residue protein sequence, read N- to C-terminus: C-type lectin domain family 2 member L (211 aa).

Positions 1-53 are disordered; it reads MEPAREPPARARPPPPAARPAPAAPRPRSPAEAEARGPEGLLRRSGSGYEGST. Positions 10–28 are enriched in pro residues; that stretch reads RARPPPPAARPAPAAPRPR. The residue at position 29 (serine 29) is a Phosphoserine. Residues 66 to 86 traverse the membrane as a helical segment; that stretch reads LLLGAIAVLLFAILVVMSILA. Cystine bridges form between cysteine 97-cysteine 108, cysteine 125-cysteine 205, and cysteine 184-cysteine 197. The C-type lectin domain maps to 104–206; sequence YGRKCYYFSE…CLTTRPWVCS (103 aa).

The protein localises to the membrane. In Rattus norvegicus (Rat), this protein is C-type lectin domain family 2 member L (Clec2l).